The sequence spans 515 residues: Iridoid oxidase (515 aa).

A run of 2 helical transmembrane segments spans residues 8–28 (SLNPVTVAISAGFLLLLIIFV) and 180–200 (AVQLSRFLFLMAFNLVGNLML). Cys-455 is a binding site for heme.

It belongs to the cytochrome P450 family. As to expression, expressed in the leaf internal phloem-associated parenchyma (IPAP) inside the mesophyll.

It localises to the endoplasmic reticulum membrane. The catalysed reaction is (+)-cis-trans-nepetalactol + 3 reduced [NADPH--hemoprotein reductase] + 3 O2 = 7-deoxyloganetate + 3 oxidized [NADPH--hemoprotein reductase] + 4 H2O + 4 H(+). Its pathway is alkaloid biosynthesis. In terms of biological role, component of the seco-iridoid and derivatives monoterpenoid indole alkaloids (MIAs, e.g. vincristine, quinine, and strychnine) biosynthesis pathway. Catalyzes the conversion of cis-trans-nepetalactol (iridodial) into 7-deoxyloganetic acid. Also converts iridotrial into 7-deoxyloganetic acid. This Catharanthus roseus (Madagascar periwinkle) protein is Iridoid oxidase.